The primary structure comprises 426 residues: Serine--tRNA ligase (426 aa).

An L-serine-binding site is contributed by 229–231 (TAE). ATP is bound at residue 260–262 (RSE). L-serine is bound at residue Glu283. Residue 347-350 (EIAS) coordinates ATP. Residue Ser383 participates in L-serine binding.

Belongs to the class-II aminoacyl-tRNA synthetase family. Type-1 seryl-tRNA synthetase subfamily. Homodimer. The tRNA molecule binds across the dimer.

The protein localises to the cytoplasm. It carries out the reaction tRNA(Ser) + L-serine + ATP = L-seryl-tRNA(Ser) + AMP + diphosphate + H(+). It catalyses the reaction tRNA(Sec) + L-serine + ATP = L-seryl-tRNA(Sec) + AMP + diphosphate + H(+). It participates in aminoacyl-tRNA biosynthesis; selenocysteinyl-tRNA(Sec) biosynthesis; L-seryl-tRNA(Sec) from L-serine and tRNA(Sec): step 1/1. Catalyzes the attachment of serine to tRNA(Ser). Is also able to aminoacylate tRNA(Sec) with serine, to form the misacylated tRNA L-seryl-tRNA(Sec), which will be further converted into selenocysteinyl-tRNA(Sec). The chain is Serine--tRNA ligase from Rickettsia bellii (strain OSU 85-389).